The sequence spans 228 residues: 2,3-bisphosphoglycerate-dependent phosphoglycerate mutase (228 aa).

Substrate contacts are provided by residues 8-15 (RHGQSEWN), 21-22 (TG), Arg60, 87-90 (ERHY), Lys98, 114-115 (RR), and 183-184 (GN). His9 (tele-phosphohistidine intermediate) is an active-site residue. Residue Glu87 is the Proton donor/acceptor of the active site.

Belongs to the phosphoglycerate mutase family. BPG-dependent PGAM subfamily.

It catalyses the reaction (2R)-2-phosphoglycerate = (2R)-3-phosphoglycerate. It participates in carbohydrate degradation; glycolysis; pyruvate from D-glyceraldehyde 3-phosphate: step 3/5. In terms of biological role, catalyzes the interconversion of 2-phosphoglycerate and 3-phosphoglycerate. The sequence is that of 2,3-bisphosphoglycerate-dependent phosphoglycerate mutase from Staphylococcus aureus (strain Mu3 / ATCC 700698).